A 696-amino-acid polypeptide reads, in one-letter code: GPI mannosyltransferase 4 (696 aa).

6 helical membrane passes run W100–L120, N125–I142, S149–M169, N185–S205, A227–A247, and Y338–G358.

This sequence belongs to the glycosyltransferase 22 family. PIGZ subfamily.

The protein localises to the endoplasmic reticulum membrane. It functions in the pathway glycolipid biosynthesis; glycosylphosphatidylinositol-anchor biosynthesis. Functionally, mannosyltransferase involved in glycosylphosphatidylinositol-anchor biosynthesis. Transfers a fourth mannose to some trimannosyl-GPIs during GPI precursor assembly. The polypeptide is GPI mannosyltransferase 4 (Drosophila melanogaster (Fruit fly)).